Here is a 231-residue protein sequence, read N- to C-terminus: NADH-ubiquinone oxidoreductase chain 4 (231 aa).

Transmembrane regions (helical) follow at residues 1–21 (PIAG…YGII), 34–54 (MFLP…LTCL), 63–85 (IAYS…TPWG), 89–111 (AMAL…NTTY), 128–148 (ILPM…ATPP), 169–189 (TIIL…HMFL), and 211–231 (LLMA…ELII).

This sequence belongs to the complex I subunit 4 family.

Its subcellular location is the mitochondrion membrane. It catalyses the reaction a ubiquinone + NADH + 5 H(+)(in) = a ubiquinol + NAD(+) + 4 H(+)(out). Functionally, core subunit of the mitochondrial membrane respiratory chain NADH dehydrogenase (Complex I) that is believed to belong to the minimal assembly required for catalysis. Complex I functions in the transfer of electrons from NADH to the respiratory chain. The immediate electron acceptor for the enzyme is believed to be ubiquinone. This is NADH-ubiquinone oxidoreductase chain 4 (MT-ND4) from Cerrophidion godmani (Porthidium godmani).